Consider the following 496-residue polypeptide: MTFNSFEGSRTVVPADTNKDEEFVEEFNRLKTFANFPSSSPVSASTLARAGFLYTGEGDTVQCFSCHAAVDRWQYGDSAVGRHRRISPNCRFINGFYFENGATQSTSPGIQNGQYKSENCVGNRNHFALDRPSETHADYLLRTGQVVDISDTIYPRNPAMCSEEARLKTFQNWPDYAHLSPRELASAGLYYTGIDDQVQCFCCGGKLKNWEPCDRAWSEHRRHFPNCFFVLGRNVNVRSESGVSSDRNFPNSTNSPRNPAMAEYDARIVTFGTWLYSVNKEQLARAGFYALGEGDKVKCFHCGGGLTDWKPSEDPWEQHAKWYPGCKYLLDEKGQEYINNIHLTHSLGESVVRTAEKTPSVTKKIDDTIFQNPMVQEAIRMGFNFKDIKKTMEEKLQTSGSNYLSLEVLIADLVSAQKDNSQDESSQTSLQKDISTEEQLRRLQEEKLCKICMDRNIAIVFVPCGHLVTCKQCAEAVDKCPMCCTVITFKQKIFMS.

3 BIR repeats span residues 26 to 93, 163 to 230, and 264 to 329; these read EFNR…CRFI, EEAR…CFFV, and YDAR…CKYL. The Zn(2+) site is built by Cys-299, Cys-302, and His-319. Residue Lys-321 forms a Glycyl lysine isopeptide (Lys-Gly) (interchain with G-Cter in ubiquitin) linkage. Cys-326 is a binding site for Zn(2+). Lys-327 is covalently cross-linked (Glycyl lysine isopeptide (Lys-Gly) (interchain with G-Cter in ubiquitin)). At Cys-449 the chain carries S-nitrosocysteine. The RING-type zinc-finger motif lies at 449–484; it reads CKICMDRNIAIVFVPCGHLVTCKQCAEAVDKCPMCC.

Belongs to the IAP family. Monomer, and homodimer. Interacts (via BIR3 domain) with DIABLO/SMAC; the interaction inhibits apoptotic suppressor activity. Interacts with HTRA2/PRSS25; the interaction inhibits apoptotic suppressor activity. Interacts with TAB1/MAP3K7IP1 and AIFM1. Interaction with DIABLO/SMAC hinders binding of TAB1/MAP3K7IP1 and AIFM1. Interacts with TCF25 and COMMD1. Interacts (via BIR3 domain) with SEPTIN4. Interacts with RIP1, RIP2, RIP3, RIP4, CCS and USP19. Interacts (via BIR 2 domain and BIR 3 domain) with HAX1 (via C-terminus) and this interaction blocks ubiquitination of XIAP/BIRC4. Interacts with the monomeric form of BIRC5/survivin. Interacts with TLE3 and TCF7L2/TCF4. Interacts (via BIR 3 and RING domains) with PDCL3. Post-translationally, S-Nitrosylation down-regulates its E3 ubiquitin-protein ligase activity. In terms of processing, autoubiquitinated. Ubiquitinated by TRIM32; leading to proteasomal degradation.

The protein localises to the cytoplasm. It localises to the nucleus. The catalysed reaction is S-ubiquitinyl-[E2 ubiquitin-conjugating enzyme]-L-cysteine + [acceptor protein]-L-lysine = [E2 ubiquitin-conjugating enzyme]-L-cysteine + N(6)-ubiquitinyl-[acceptor protein]-L-lysine.. Functionally, multi-functional protein which regulates not only caspases and apoptosis, but also modulates inflammatory signaling and immunity, copper homeostasis, mitogenic kinase signaling, cell proliferation, as well as cell invasion and metastasis. Acts as a direct caspase inhibitor. Directly bind to the active site pocket of CASP3 and CASP7 and obstructs substrate entry. Inactivates CASP9 by keeping it in a monomeric, inactive state. Acts as an E3 ubiquitin-protein ligase regulating NF-kappa-B signaling and the target proteins for its E3 ubiquitin-protein ligase activity include: RIPK1, RIPK2, MAP3K2/MEKK2, DIABLO/SMAC, AIFM1, CCS, PTEN and BIRC5/survivin. Acts as an important regulator of innate immunity by mediating 'Lys-63'-linked polyubiquitination of RIPK2 downstream of NOD1 and NOD2, thereby transforming RIPK2 into a scaffolding protein for downstream effectors, ultimately leading to activation of the NF-kappa-B and MAP kinases signaling. 'Lys-63'-linked polyubiquitination of RIPK2 also promotes recruitment of the LUBAC complex to RIPK2. Regulates the BMP signaling pathway and the SMAD and MAP3K7/TAK1 dependent pathways leading to NF-kappa-B and JNK activation. Ubiquitination of CCS leads to enhancement of its chaperone activity toward its physiologic target, SOD1, rather than proteasomal degradation. Ubiquitination of MAP3K2/MEKK2 and AIFM1 does not lead to proteasomal degradation. Plays a role in copper homeostasis by ubiquitinating COMMD1 and promoting its proteasomal degradation. Can also function as E3 ubiquitin-protein ligase of the NEDD8 conjugation pathway, targeting effector caspases for neddylation and inactivation. Ubiquitinates and therefore mediates the proteasomal degradation of BCL2 in response to apoptosis. Protects cells from spontaneous formation of the ripoptosome, a large multi-protein complex that has the capability to kill cancer cells in a caspase-dependent and caspase-independent manner. Suppresses ripoptosome formation by ubiquitinating RIPK1 and CASP8. Acts as a positive regulator of Wnt signaling and ubiquitinates TLE1, TLE2, TLE3, TLE4 and AES. Ubiquitination of TLE3 results in inhibition of its interaction with TCF7L2/TCF4 thereby allowing efficient recruitment and binding of the transcriptional coactivator beta-catenin to TCF7L2/TCF4 that is required to initiate a Wnt-specific transcriptional program. This chain is E3 ubiquitin-protein ligase XIAP (Xiap), found in Rattus norvegicus (Rat).